The chain runs to 327 residues: Methionyl-tRNA formyltransferase (327 aa).

A (6S)-5,6,7,8-tetrahydrofolate-binding site is contributed by 121-124 (SLLP).

The protein belongs to the Fmt family.

It catalyses the reaction L-methionyl-tRNA(fMet) + (6R)-10-formyltetrahydrofolate = N-formyl-L-methionyl-tRNA(fMet) + (6S)-5,6,7,8-tetrahydrofolate + H(+). In terms of biological role, attaches a formyl group to the free amino group of methionyl-tRNA(fMet). The formyl group appears to play a dual role in the initiator identity of N-formylmethionyl-tRNA by promoting its recognition by IF2 and preventing the misappropriation of this tRNA by the elongation apparatus. The protein is Methionyl-tRNA formyltransferase of Burkholderia mallei (strain ATCC 23344).